The following is a 364-amino-acid chain: NADH-quinone oxidoreductase subunit H (364 aa).

Transmembrane regions (helical) follow at residues 15–35 (LLVLGQIGLFTLVLLLSIAFL), 84–104 (AVFILAPILTCTLAFVTWAAI), 123–143 (VGVLYLFAISSLGVYGIIMGG), 169–189 (IGFVIVTVILLVGSMNLTTIV), 206–226 (YFPLIVVMVPMFVIFFISALA), 257–277 (LFMLGEYLNIVLMCAMMTILF), 302–322 (LSGLAWFMGKVLFCFFLFALV), and 341–361 (IFLPTSLAAVIIVAGYVTFVG).

It belongs to the complex I subunit 1 family. NDH-1 is composed of 14 different subunits. Subunits NuoA, H, J, K, L, M, N constitute the membrane sector of the complex.

It is found in the cell inner membrane. It catalyses the reaction a quinone + NADH + 5 H(+)(in) = a quinol + NAD(+) + 4 H(+)(out). Functionally, NDH-1 shuttles electrons from NADH, via FMN and iron-sulfur (Fe-S) centers, to quinones in the respiratory chain. The immediate electron acceptor for the enzyme in this species is believed to be ubiquinone. Couples the redox reaction to proton translocation (for every two electrons transferred, four hydrogen ions are translocated across the cytoplasmic membrane), and thus conserves the redox energy in a proton gradient. This subunit may bind ubiquinone. This is NADH-quinone oxidoreductase subunit H from Hyphomonas neptunium (strain ATCC 15444).